Here is a 132-residue protein sequence, read N- to C-terminus: Small ribosomal subunit protein uS8 (132 aa).

The protein belongs to the universal ribosomal protein uS8 family. In terms of assembly, part of the 30S ribosomal subunit. Contacts proteins S5 and S12.

In terms of biological role, one of the primary rRNA binding proteins, it binds directly to 16S rRNA central domain where it helps coordinate assembly of the platform of the 30S subunit. In Clostridium botulinum (strain ATCC 19397 / Type A), this protein is Small ribosomal subunit protein uS8.